Here is a 318-residue protein sequence, read N- to C-terminus: Glutathione synthetase (318 aa).

In terms of domain architecture, ATP-grasp spans 129-314 (KLAITEFPDL…VPEMFAVALE (186 aa)). Position 155-211 (155-211 (HAAQGDVIVKPLDGMGGTGIFRLQRSEPNLNAILETLTDNGTRTIMAQRYIPEIVKG)) interacts with ATP. Mg(2+) is bound by residues glutamate 285 and asparagine 287.

It belongs to the prokaryotic GSH synthase family. Mg(2+) is required as a cofactor. Mn(2+) serves as cofactor.

The enzyme catalyses gamma-L-glutamyl-L-cysteine + glycine + ATP = glutathione + ADP + phosphate + H(+). The protein operates within sulfur metabolism; glutathione biosynthesis; glutathione from L-cysteine and L-glutamate: step 2/2. The chain is Glutathione synthetase from Bordetella bronchiseptica (strain ATCC BAA-588 / NCTC 13252 / RB50) (Alcaligenes bronchisepticus).